A 425-amino-acid polypeptide reads, in one-letter code: Enolase (425 aa).

(2R)-2-phosphoglycerate is bound at residue Gln163. Catalysis depends on Glu205, which acts as the Proton donor. The Mg(2+) site is built by Asp242, Glu286, and Asp313. Positions 338, 367, 368, and 389 each coordinate (2R)-2-phosphoglycerate. Lys338 (proton acceptor) is an active-site residue.

This sequence belongs to the enolase family. The cofactor is Mg(2+).

The protein resides in the cytoplasm. It localises to the secreted. The protein localises to the cell surface. The catalysed reaction is (2R)-2-phosphoglycerate = phosphoenolpyruvate + H2O. It functions in the pathway carbohydrate degradation; glycolysis; pyruvate from D-glyceraldehyde 3-phosphate: step 4/5. Functionally, catalyzes the reversible conversion of 2-phosphoglycerate (2-PG) into phosphoenolpyruvate (PEP). It is essential for the degradation of carbohydrates via glycolysis. In Helicobacter hepaticus (strain ATCC 51449 / 3B1), this protein is Enolase.